We begin with the raw amino-acid sequence, 557 residues long: Alpha-glucosidase (557 aa).

D201 serves as the catalytic Nucleophile. Catalysis depends on E256, which acts as the Proton donor.

Belongs to the glycosyl hydrolase 13 family.

It catalyses the reaction Hydrolysis of terminal, non-reducing (1-&gt;4)-linked alpha-D-glucose residues with release of alpha-D-glucose.. This Pediococcus pentosaceus protein is Alpha-glucosidase (agl).